A 332-amino-acid polypeptide reads, in one-letter code: Fructose-1,6-bisphosphatase class 1 (332 aa).

E92, D113, L115, and D116 together coordinate Mg(2+). Substrate-binding positions include 116–119 (DGSS), N209, Y242, and K272. E278 provides a ligand contact to Mg(2+).

This sequence belongs to the FBPase class 1 family. As to quaternary structure, homotetramer. Mg(2+) serves as cofactor.

It localises to the cytoplasm. It carries out the reaction beta-D-fructose 1,6-bisphosphate + H2O = beta-D-fructose 6-phosphate + phosphate. It participates in carbohydrate biosynthesis; Calvin cycle. The protein is Fructose-1,6-bisphosphatase class 1 of Prosthecochloris aestuarii (strain DSM 271 / SK 413).